Reading from the N-terminus, the 149-residue chain is Transcriptional repressor NrdR (149 aa).

Residues 3-34 fold into a zinc finger; sequence CPFCSAVDTKVIDSRLVGEGTQVRRRRQCVIC. The 91-residue stretch at 49–139 folds into the ATP-cone domain; it reads PRVIKSNDVR…VYRSFEDIRE (91 aa).

This sequence belongs to the NrdR family. Zn(2+) is required as a cofactor.

Its function is as follows. Negatively regulates transcription of bacterial ribonucleotide reductase nrd genes and operons by binding to NrdR-boxes. The polypeptide is Transcriptional repressor NrdR (Sodalis glossinidius (strain morsitans)).